A 285-amino-acid polypeptide reads, in one-letter code: Protease HtpX homolog (285 aa).

Transmembrane regions (helical) follow at residues 7-27 (TAML…MIGG) and 30-50 (GMTI…WFSD). Zn(2+) is bound at residue His131. The active site involves Glu132. His135 contacts Zn(2+). The next 2 membrane-spanning stretches (helical) occupy residues 146-166 (ITAT…FFGG) and 177-197 (IAGI…QMAI). Glu202 contacts Zn(2+).

It belongs to the peptidase M48B family. Zn(2+) is required as a cofactor.

The protein resides in the cell inner membrane. The protein is Protease HtpX homolog of Burkholderia lata (strain ATCC 17760 / DSM 23089 / LMG 22485 / NCIMB 9086 / R18194 / 383).